The primary structure comprises 578 residues: Phosphatase DCR2 (578 aa).

Residue 116 to 123 (GRRWFGKS) participates in ATP binding.

The protein resides in the cytoplasm. In terms of biological role, required for cell cycle progression. Has a role in the completion of START. This Saccharomyces cerevisiae (strain ATCC 204508 / S288c) (Baker's yeast) protein is Phosphatase DCR2 (DCR2).